We begin with the raw amino-acid sequence, 226 residues long: Late protein I226R (226 aa).

A signal peptide spans M1–G16. N164 carries an N-linked (GlcNAc...) asparagine; by host glycan.

The protein belongs to the asfivirus I226R family.

In terms of biological role, plays a role in the inhibition of host NF-kappa-B and IRF3 signaling pathways. Mechanistically, promotes the degradation of host IKBKG through enhancing its ubiquitination leading to inhibition of both pathways. This chain is Late protein I226R, found in Ornithodoros (relapsing fever ticks).